The following is a 467-amino-acid chain: UDP-N-acetylmuramate--L-alanine ligase (467 aa).

An ATP-binding site is contributed by 114-120 (GTHGKTT).

It belongs to the MurCDEF family.

The protein resides in the cytoplasm. The enzyme catalyses UDP-N-acetyl-alpha-D-muramate + L-alanine + ATP = UDP-N-acetyl-alpha-D-muramoyl-L-alanine + ADP + phosphate + H(+). It participates in cell wall biogenesis; peptidoglycan biosynthesis. Functionally, cell wall formation. This chain is UDP-N-acetylmuramate--L-alanine ligase, found in Azorhizobium caulinodans (strain ATCC 43989 / DSM 5975 / JCM 20966 / LMG 6465 / NBRC 14845 / NCIMB 13405 / ORS 571).